Reading from the N-terminus, the 453-residue chain is Chromosomal replication initiator protein DnaA (453 aa).

The domain I, interacts with DnaA modulators stretch occupies residues 1 to 79 (MKSLIQEKWN…KTAIAEVINQ (79 aa)). Residues 79–111 (QDFEIEFVLLSQTKAEEKVQTQAPNKIKNESLS) are domain II. The tract at residues 112–330 (YLNPRYTFDT…GALTKIVALS (219 aa)) is domain III, AAA+ region. ATP-binding residues include Gly156, Gly158, Lys159, and Thr160. Residues 331–453 (RLKKKEVDVI…VLIKKINPTP (123 aa)) form a domain IV, binds dsDNA region.

Belongs to the DnaA family. As to quaternary structure, oligomerizes as a right-handed, spiral filament on DNA at oriC.

Its subcellular location is the cytoplasm. In terms of biological role, plays an essential role in the initiation and regulation of chromosomal replication. ATP-DnaA binds to the origin of replication (oriC) to initiate formation of the DNA replication initiation complex once per cell cycle. Binds the DnaA box (a 9 base pair repeat at the origin) and separates the double-stranded (ds)DNA. Forms a right-handed helical filament on oriC DNA; dsDNA binds to the exterior of the filament while single-stranded (ss)DNA is stabiized in the filament's interior. The ATP-DnaA-oriC complex binds and stabilizes one strand of the AT-rich DNA unwinding element (DUE), permitting loading of DNA polymerase. After initiation quickly degrades to an ADP-DnaA complex that is not apt for DNA replication. Binds acidic phospholipids. The protein is Chromosomal replication initiator protein DnaA of Lachnoclostridium phytofermentans (strain ATCC 700394 / DSM 18823 / ISDg) (Clostridium phytofermentans).